We begin with the raw amino-acid sequence, 248 residues long: 5'-nucleotidase SurE (248 aa).

Residues Asp8, Asp9, Ser39, and Asn91 each contribute to the a divalent metal cation site.

The protein belongs to the SurE nucleotidase family. A divalent metal cation is required as a cofactor.

It is found in the cytoplasm. The catalysed reaction is a ribonucleoside 5'-phosphate + H2O = a ribonucleoside + phosphate. Functionally, nucleotidase that shows phosphatase activity on nucleoside 5'-monophosphates. This Neisseria meningitidis serogroup A / serotype 4A (strain DSM 15465 / Z2491) protein is 5'-nucleotidase SurE.